The chain runs to 259 residues: Thiazole synthase (259 aa).

Residue K102 is the Schiff-base intermediate with DXP of the active site. Residues G163, 189-190, and 211-212 contribute to the 1-deoxy-D-xylulose 5-phosphate site; these read AG and NT.

The protein belongs to the ThiG family. In terms of assembly, homotetramer. Forms heterodimers with either ThiH or ThiS.

The protein resides in the cytoplasm. The enzyme catalyses [ThiS sulfur-carrier protein]-C-terminal-Gly-aminoethanethioate + 2-iminoacetate + 1-deoxy-D-xylulose 5-phosphate = [ThiS sulfur-carrier protein]-C-terminal Gly-Gly + 2-[(2R,5Z)-2-carboxy-4-methylthiazol-5(2H)-ylidene]ethyl phosphate + 2 H2O + H(+). The protein operates within cofactor biosynthesis; thiamine diphosphate biosynthesis. Functionally, catalyzes the rearrangement of 1-deoxy-D-xylulose 5-phosphate (DXP) to produce the thiazole phosphate moiety of thiamine. Sulfur is provided by the thiocarboxylate moiety of the carrier protein ThiS. In vitro, sulfur can be provided by H(2)S. In Novosphingobium aromaticivorans (strain ATCC 700278 / DSM 12444 / CCUG 56034 / CIP 105152 / NBRC 16084 / F199), this protein is Thiazole synthase.